Reading from the N-terminus, the 235-residue chain is Exotoxin type C (235 aa).

A signal peptide spans 1 to 27; that stretch reads MKKINIIKIVFIITVILISTISPIIKS. 3 residues coordinate Zn(2+): His-194, His-228, and Asp-230.

The protein belongs to the staphylococcal/streptococcal toxin family.

Functionally, superantigen that acts as a causative agent of the symptoms associated with scarlet fever. Has been associated with streptococcal toxic shock-like disease and may play a role in the early events of rheumatic fever. Superantigens cross-link major histocompatibility complex (MHC) class II and T-cell receptor (TCR) molecules, resulting in an overstimulation of T-cells associated with a massive release of pyrogenic and inflammatory cytokines. The protein is Exotoxin type C of Streptococcus pyogenes serotype M18 (strain MGAS8232).